A 649-amino-acid chain; its full sequence is Thioredoxin reductase 1, cytoplasmic (649 aa).

Met-1 bears the N-acetylmethionine mark. The disordered stretch occupies residues 1–49 (MGCAEGKAVAAAAPTELQTKGKNGDGRRRSAKDHHPGKTLPENPAGFTS). Positions 22-36 (KNGDGRRRSAKDHHP) are enriched in basic and acidic residues. In terms of domain architecture, Glutaredoxin spans 56–156 (RALLQAYIDG…KLLKMNGPED (101 aa)). Positions 145-149 (LQKLL) are required for interaction with ESR1 and ESR2. FAD contacts are provided by residues 172-173 (SG), 192-193 (DF), 208-209 (TC), and 213-217 (GCIPK). Cys-209 and Cys-214 are joined by a disulfide. Lys-218 bears the N6-succinyllysine mark. Tyr-281 is modified (phosphotyrosine). Residues 281-282 (YG) and Thr-311 contribute to the FAD site. Residues Arg-316, 348–354 (ASYVALE), 371–372 (RS), Arg-376, 376–378 (RGF), 442–443 (GR), and Lys-465 contribute to the NADP(+) site. Position 350 (Tyr-350) interacts with FAD. FAD is bound by residues Asp-484, 491–493 (ELT), and His-622. Glu-491 provides a ligand contact to NADP(+). Residue His-622 is the Proton acceptor of the active site. Positions 647–648 (CU) form a cross-link, cysteinyl-selenocysteine (Cys-Sec). Residue Sec-648 is a non-standard amino acid, selenocysteine.

The protein belongs to the class-I pyridine nucleotide-disulfide oxidoreductase family. As to quaternary structure, homodimer. Interacts with HERC5. Interacts with ESR1 and ESR2. The cofactor is FAD. In terms of processing, the N-terminus is blocked. Post-translationally, ISGylated. As to expression, expressed predominantly in Leydig cells (at protein level). Also expressed in ovary, spleen, heart, liver, kidney and pancreas and in a number of cancer cell lines. Widely expressed with highest levels in kidney, testis, uterus, ovary, prostate, placenta and fetal liver.

It localises to the cytoplasm. The protein resides in the nucleus. The enzyme catalyses [thioredoxin]-dithiol + NADP(+) = [thioredoxin]-disulfide + NADPH + H(+). The catalysed reaction is H2O2 + NADPH + H(+) = NADP(+) + 2 H2O. In terms of biological role, reduces disulfideprotein thioredoxin (Trx) to its dithiol-containing form. Homodimeric flavoprotein involved in the regulation of cellular redox reactions, growth and differentiation. Contains a selenocysteine residue at the C-terminal active site that is essential for catalysis. Also has reductase activity on hydrogen peroxide (H2O2). Induces actin and tubulin polymerization, leading to formation of cell membrane protrusions. Its function is as follows. Enhances the transcriptional activity of estrogen receptors ESR1 and ESR2. Functionally, enhances the transcriptional activity of the estrogen receptor ESR2 only. Mediates cell death induced by a combination of interferon-beta and retinoic acid. The polypeptide is Thioredoxin reductase 1, cytoplasmic (Homo sapiens (Human)).